Here is a 432-residue protein sequence, read N- to C-terminus: D-amino acid dehydrogenase 1 (432 aa).

FAD is bound at residue 3-17 (VLVLGSGVIGTASAY). A disordered region spans residues 410-432 (GLDISRYSNSPENAKNAHPAPAH).

This sequence belongs to the DadA oxidoreductase family. FAD serves as cofactor.

The enzyme catalyses a D-alpha-amino acid + A + H2O = a 2-oxocarboxylate + AH2 + NH4(+). It functions in the pathway amino-acid degradation; D-alanine degradation; NH(3) and pyruvate from D-alanine: step 1/1. Functionally, catalyzes the oxidative deamination of D-amino acids. Has very broad substrate specificity; all the D-amino acids tested can be used as the substrate except D-Glu and D-Gln. Participates in the utilization of several D-amino acids as the sole source of nitrogen, i.e. D-alanine, D-histidine, D-phenylalanine, D-serine, D-threonine, and D-valine. This is D-amino acid dehydrogenase 1 (dadA1) from Pseudomonas aeruginosa (strain ATCC 15692 / DSM 22644 / CIP 104116 / JCM 14847 / LMG 12228 / 1C / PRS 101 / PAO1).